A 240-amino-acid polypeptide reads, in one-letter code: MLPDKIIYEGKAKFIIETKDPLTVIQYFKDEVTAFNKEKYKIIEGKGTINNRISTFIMETLEKAGINTHFIKTLSEREQLVKKLKIIPLEIVVRNIAAGSFCKRFNIKEGEKLAFPIIEFFYKNDGLADPMVNENHVLYFGWLSYEEMEEIKTITIKINTVLIDLFLNAGIDLVDLKLEFGRPINDNTKITLADEISPDNCRLWDKNTHKKLDKDVFRLNLGNLKEAYLEVAKRLSVKLC.

This sequence belongs to the SAICAR synthetase family.

It carries out the reaction 5-amino-1-(5-phospho-D-ribosyl)imidazole-4-carboxylate + L-aspartate + ATP = (2S)-2-[5-amino-1-(5-phospho-beta-D-ribosyl)imidazole-4-carboxamido]succinate + ADP + phosphate + 2 H(+). Its pathway is purine metabolism; IMP biosynthesis via de novo pathway; 5-amino-1-(5-phospho-D-ribosyl)imidazole-4-carboxamide from 5-amino-1-(5-phospho-D-ribosyl)imidazole-4-carboxylate: step 1/2. The sequence is that of Phosphoribosylaminoimidazole-succinocarboxamide synthase from Wolbachia sp. subsp. Brugia malayi (strain TRS).